Consider the following 457-residue polypeptide: Heme sensor protein HssS (457 aa).

2 helical membrane-spanning segments follow: residues 9–29 (IAIY…VLTN) and 164–184 (TFLA…VIAS). Residues 186 to 238 (YSIIRPVKKLKLATERLIDGDFETPIKQTRKDEIGTLQYHFNKMRESLGQVDQ) form the HAMP domain. A Histidine kinase domain is found at 246-456 (NVSHEIKTPL…TFTITLPNNS (211 aa)). H249 carries the post-translational modification Phosphohistidine; by autocatalysis.

In terms of processing, autophosphorylated.

The protein resides in the cell membrane. The catalysed reaction is ATP + protein L-histidine = ADP + protein N-phospho-L-histidine.. Member of the two-component regulatory system HssS/HssR involved in intracellular heme homeostasis and tempering of staphylococcal virulence. HssS functions as a heme sensor histidine kinase which is autophosphorylated at a histidine residue and transfers its phosphate group to an aspartate residue of HssR. HssR/HssS activates the expression of hrtAB, an efflux pump, in response to extracellular heme, hemin, hemoglobin or blood. This is Heme sensor protein HssS (hssS) from Staphylococcus aureus (strain MSSA476).